A 643-amino-acid chain; its full sequence is UvrABC system protein C (643 aa).

Residues 25–104 form the GIY-YIG domain; the sequence is AEPGVYFMRD…IKQHQPHFNV (80 aa). Positions 214-249 constitute a UVR domain; that stretch reads SELVELLEAQMLQAAENLEFEKAAKIRDQIRGLEGL.

Belongs to the UvrC family. As to quaternary structure, interacts with UvrB in an incision complex.

It is found in the cytoplasm. Its function is as follows. The UvrABC repair system catalyzes the recognition and processing of DNA lesions. UvrC both incises the 5' and 3' sides of the lesion. The N-terminal half is responsible for the 3' incision and the C-terminal half is responsible for the 5' incision. The chain is UvrABC system protein C from Synechococcus elongatus (strain ATCC 33912 / PCC 7942 / FACHB-805) (Anacystis nidulans R2).